We begin with the raw amino-acid sequence, 628 residues long: tRNA uridine 5-carboxymethylaminomethyl modification enzyme MnmG (628 aa).

Gly13–Gly18 provides a ligand contact to FAD. Gly273–Phe287 serves as a coordination point for NAD(+).

Belongs to the MnmG family. As to quaternary structure, homodimer. Heterotetramer of two MnmE and two MnmG subunits. FAD serves as cofactor.

The protein resides in the cytoplasm. In terms of biological role, NAD-binding protein involved in the addition of a carboxymethylaminomethyl (cmnm) group at the wobble position (U34) of certain tRNAs, forming tRNA-cmnm(5)s(2)U34. In Buchnera aphidicola subsp. Acyrthosiphon pisum (strain Tuc7), this protein is tRNA uridine 5-carboxymethylaminomethyl modification enzyme MnmG.